The sequence spans 420 residues: Nucleobindin-2 (420 aa).

The N-terminal stretch at 1 to 24 is a signal peptide; the sequence is MRWRTIQARYCFLLVPCVLTALEA. Residues 171 to 223 mediate DNA binding; that stretch reads RTRHEEFKKYEMMKEHERREYLKTLSEEKRKEEEAKFAEMKRKHEDHPKVNHP. Residues 194-225 form a disordered region; that stretch reads TLSEEKRKEEEAKFAEMKRKHEDHPKVNHPGS. Residues 213–420 form a binds to necdin region; sequence KHEDHPKVNH…AGELKFEPHT (208 aa). EF-hand domains are found at residues 241–276 and 293–328; these read PNDF…ELDK and ERLR…KEFL. Residues Asp-254, Asn-256, Asp-258, Glu-265, Asp-306, Asn-308, Asp-310, and Glu-317 each contribute to the Ca(2+) site. Positions 304-334 match the GBA motif; that stretch reads EIDNNKDRLVTLEEFLRATEKKEFLEPDSWE. A Phosphoserine modification is found at Ser-332. A compositionally biased stretch (basic and acidic residues) spans 366–386; it reads DELQKQKEELQRQHDHLEAQK. Residues 366 to 420 are disordered; sequence DELQKQKEELQRQHDHLEAQKQEYQQAVQQLEQKKFQQGIAPSGPAGELKFEPHT. Residues 387–396 show a composition bias toward low complexity; the sequence is QEYQQAVQQL.

This sequence belongs to the nucleobindin family. In terms of assembly, interacts (via GBA motif) with guanine nucleotide-binding protein G(i) alpha subunit GNAI3. Preferentially interacts with inactive rather than active GNAI3. Interaction with GNAI3 is inhibited when NUCB2 binds calcium, probably due to a conformational change which renders the GBA motif inaccessible. Binds to the postmitotic growth suppressor NDN; coexpression abolishes NUCB2 secretion. Interacts with MC4R.

Its subcellular location is the golgi apparatus. The protein resides in the endoplasmic reticulum. It localises to the nucleus envelope. It is found in the membrane. The protein localises to the cytoplasm. Its subcellular location is the secreted. Calcium-binding protein which may have a role in calcium homeostasis. Acts as a non-receptor guanine nucleotide exchange factor which binds to and activates guanine nucleotide-binding protein (G-protein) alpha subunit GNAI3. Its function is as follows. Anorexigenic peptide, seems to play an important role in hypothalamic pathways regulating food intake and energy homeostasis, acting in a leptin-independent manner. May also exert hypertensive roles and modulate blood pressure through directly acting on peripheral arterial resistance. In intestinal epithelial cells, plays a role in the inhibition of hepatic glucose production via MC4R receptor leading to increased cyclic adenosine monophosphate (cAMP) levels and glucagon-like peptide 1 (GLP-1) secretion. This chain is Nucleobindin-2 (Nucb2), found in Rattus norvegicus (Rat).